The primary structure comprises 350 residues: S-adenosylmethionine:tRNA ribosyltransferase-isomerase (350 aa).

It belongs to the QueA family. In terms of assembly, monomer.

The protein resides in the cytoplasm. It catalyses the reaction 7-aminomethyl-7-carbaguanosine(34) in tRNA + S-adenosyl-L-methionine = epoxyqueuosine(34) in tRNA + adenine + L-methionine + 2 H(+). It functions in the pathway tRNA modification; tRNA-queuosine biosynthesis. Its function is as follows. Transfers and isomerizes the ribose moiety from AdoMet to the 7-aminomethyl group of 7-deazaguanine (preQ1-tRNA) to give epoxyqueuosine (oQ-tRNA). This chain is S-adenosylmethionine:tRNA ribosyltransferase-isomerase, found in Saccharophagus degradans (strain 2-40 / ATCC 43961 / DSM 17024).